A 323-amino-acid chain; its full sequence is UDP-N-acetylenolpyruvoylglucosamine reductase (323 aa).

The region spanning 33-214 (IGGPAEALFC…LSAVFTLTHG (182 aa)) is the FAD-binding PCMH-type domain. The active-site Proton donor is Ser243. The active site involves Glu315.

It belongs to the MurB family. FAD serves as cofactor.

It localises to the cytoplasm. The catalysed reaction is UDP-N-acetyl-alpha-D-muramate + NADP(+) = UDP-N-acetyl-3-O-(1-carboxyvinyl)-alpha-D-glucosamine + NADPH + H(+). It participates in cell wall biogenesis; peptidoglycan biosynthesis. Cell wall formation. The protein is UDP-N-acetylenolpyruvoylglucosamine reductase of Treponema denticola (strain ATCC 35405 / DSM 14222 / CIP 103919 / JCM 8153 / KCTC 15104).